A 128-amino-acid polypeptide reads, in one-letter code: Cytochrome c' (128 aa).

Heme c contacts are provided by Q13, Q17, E69, T70, C118, C121, and H122.

Binds 1 heme c group covalently per subunit.

Functionally, cytochrome c' is the most widely occurring bacterial c-type cytochrome. Cytochromes c' are high-spin proteins and the heme has no sixth ligand. Their exact function is not known. This Magnetospirillum fulvum (Rhodospirillum fulvum) protein is Cytochrome c'.